A 278-amino-acid polypeptide reads, in one-letter code: MHEYIRKSLTIDCEAVTNYIVERIREYLEFSNKKGGVIGVSGGVDSAVTATLLAKATDNFFILLMPSSSTPKIDLDDSFEMIKFLNAQNKYKLINIDEIVKSFSNKIETENKYIIGNIKARVRMIILYAYAQMLDYLVVGTGDKSELLLGYFTKYGDGGVDVLPIGDLYKTQVRMLGKCLGLPERIVTKPSSPALWEGQTAEGELGIDYETIDSILYLRFDEMRSEDEIVKMLGIPIDIVKKVDRLVKISQHKRLPPEIFRLSGRAINSDWRFPRRWA.

39–46 (GVSGGVDS) is a binding site for ATP. Asp45 lines the Mg(2+) pocket. Position 121 (Arg121) interacts with deamido-NAD(+). Thr141 contacts ATP. Glu146 is a Mg(2+) binding site. 2 residues coordinate deamido-NAD(+): Lys154 and Asp161. ATP-binding residues include Lys170 and Ser192. 252–253 (HK) contributes to the deamido-NAD(+) binding site.

It belongs to the NAD synthetase family. As to quaternary structure, homodimer.

It catalyses the reaction deamido-NAD(+) + NH4(+) + ATP = AMP + diphosphate + NAD(+) + H(+). The protein operates within cofactor biosynthesis; NAD(+) biosynthesis; NAD(+) from deamido-NAD(+) (ammonia route): step 1/1. In terms of biological role, catalyzes the ATP-dependent amidation of deamido-NAD to form NAD. Uses ammonia as a nitrogen source. This chain is NH(3)-dependent NAD(+) synthetase, found in Saccharolobus solfataricus (strain ATCC 35092 / DSM 1617 / JCM 11322 / P2) (Sulfolobus solfataricus).